Consider the following 306-residue polypeptide: Non-specific ribonucleoside hydrolase RihC (306 aa).

H235 is an active-site residue.

Belongs to the IUNH family. RihC subfamily.

In terms of biological role, hydrolyzes both purine and pyrimidine ribonucleosides with a broad-substrate specificity. The polypeptide is Non-specific ribonucleoside hydrolase RihC (Salmonella heidelberg (strain SL476)).